The chain runs to 343 residues: Type II restriction enzyme BsuMI component YdiS (343 aa).

In terms of assembly, bsuMI restriction activity requires YdiR, YdiS and YdjA.

It catalyses the reaction Endonucleolytic cleavage of DNA to give specific double-stranded fragments with terminal 5'-phosphates.. Functionally, a P subtype restriction enzyme that recognizes the double-stranded sequence 5'-CTCGAG-3'; the cleavage site is unknown. The sequence is that of Type II restriction enzyme BsuMI component YdiS (ydiS) from Bacillus subtilis (strain 168).